Consider the following 87-residue polypeptide: MNLKVLFLLAMVLVTLCLGEDRVTDRRQLCKCCAKLCHEDRDRTIPCSGGNSQFCEFCKRTKQKIRKDCNTQNEAKALCVGYFTGEC.

A signal peptide spans 1 to 21; that stretch reads MNLKVLFLLAMVLVTLCLGED. The propeptide occupies 22-27; that stretch reads RVTDRR.

It belongs to the teretoxin C (TC) superfamily. Post-translationally, contains 5 disulfide bonds. In terms of tissue distribution, expressed by the venom duct.

The protein localises to the secreted. The sequence is that of Tan_10cys from Terebra anilis (Auger snail).